We begin with the raw amino-acid sequence, 346 residues long: GTPase Obg (346 aa).

Residues 1–158 (MKFLDQVKIY…RAIWLRLKLI (158 aa)) form the Obg domain. An OBG-type G domain is found at 159–327 (ADVGLVGLPN…LLREAFALVR (169 aa)). GTP contacts are provided by residues 165-172 (GLPNAGKS), 190-194 (FTTLA), 212-215 (DIPG), 279-282 (NKID), and 308-310 (SGF). Residues Ser-172 and Thr-192 each contribute to the Mg(2+) site.

This sequence belongs to the TRAFAC class OBG-HflX-like GTPase superfamily. OBG GTPase family. As to quaternary structure, monomer. It depends on Mg(2+) as a cofactor.

It localises to the cytoplasm. An essential GTPase which binds GTP, GDP and possibly (p)ppGpp with moderate affinity, with high nucleotide exchange rates and a fairly low GTP hydrolysis rate. Plays a role in control of the cell cycle, stress response, ribosome biogenesis and in those bacteria that undergo differentiation, in morphogenesis control. The sequence is that of GTPase Obg from Phenylobacterium zucineum (strain HLK1).